A 452-amino-acid chain; its full sequence is Eukaryotic translation initiation factor 3 subunit E (452 aa).

The span at 1–17 (MADNTPTTANDLLNDAT) shows a compositional bias: polar residues. The disordered stretch occupies residues 1–23 (MADNTPTTANDLLNDATQAAAKS). The PCI domain occupies 246 to 426 (PFFNHEPARD…GTVVMNHPPS (181 aa)).

Belongs to the eIF-3 subunit E family. Component of the eukaryotic translation initiation factor 3 (eIF-3) complex.

The protein localises to the cytoplasm. Its function is as follows. Component of the eukaryotic translation initiation factor 3 (eIF-3) complex, which is involved in protein synthesis of a specialized repertoire of mRNAs and, together with other initiation factors, stimulates binding of mRNA and methionyl-tRNAi to the 40S ribosome. The eIF-3 complex specifically targets and initiates translation of a subset of mRNAs involved in cell proliferation. In Botryotinia fuckeliana (strain B05.10) (Noble rot fungus), this protein is Eukaryotic translation initiation factor 3 subunit E (int6).